An 896-amino-acid chain; its full sequence is Echinoderm microtubule-associated protein-like 3 (896 aa).

Position 1 is an N-acetylmethionine (Met1). A coiled-coil region spans residues 16–43 (LQSLSQRLRVQEQEMELVKAALAEALRL). The disordered stretch occupies residues 50–209 (PSSLQGSGTP…GGPGSRRSNY (160 aa)). Positions 77-88 (TPSLVSRGTQTE) are enriched in polar residues. A compositionally biased stretch (pro residues) spans 134–145 (PGPPGILRPLQP). Residues 154 to 163 (RNSSSSSSPS) are compositionally biased toward low complexity. The span at 174 to 189 (AISSANLLVRSGSTES) shows a compositional bias: polar residues. Phosphoserine occurs at positions 176, 198, and 204. WD repeat units lie at residues 234–286 (RSLE…LYRP), 295–344 (GGGQ…IWDS), 350–392 (LQEI…VWDC), 398–434 (LAEIKSTNDSVLAVGFNPRDSSCIVTSGKSHVHFWNW), 448–487 (RKQGVFGKYKKPKFIPCFVFLPDGDILTGDSEGNILTWGR), 504–543 (YGIVAQAHAHEGSIFALCLRRDGTVLSGGGRDRRLVQWGP), 549–584 (QEAEIPEHFGAVRAIAEGLGSELLVGTTKNALLRGD), 589–626 (FSPVIQGHTDELWGLCTHPSQNRFLTCGHDRQLCLWDG), 629–667 (HALAWSIDLKETGLCADFHPSGAVVAVGLNTGRWLVLDT), 674–709 (SDVIDGNEQLSVVRYSPDGLYLAIGSHDNVIYIYSV), 716–755 (SSRFGRCMGHSSFITHLDWSKDGNFIMSNSGDYEILYWDV), 765–823 (RYES…LFQY), and 830–869 (APSRMYGGHGSHVTSVRFTHDDSHLVSLGGKDASIFQWRV). The disordered stretch occupies residues 876-896 (GPAPATPSRTPSLSPASSLDV). Over residues 877–896 (PAPATPSRTPSLSPASSLDV) the composition is skewed to low complexity. A Phosphothreonine; by CDK1 modification is found at Thr881. Ser883 is subject to Phosphoserine.

The protein belongs to the WD repeat EMAP family. In terms of assembly, homotrimer; self-association is mediated by the N-terminal coiled coil. Interacts with EML2 but not with EML1. Interacts (phosphorylated at Thr-881) with TUBG1, HAUS1, HAUS2, HAUS3, HAUS4, HAUS5, HAUS6, HAUS7 and HAUS8. Post-translationally, phosphorylation at Thr-881 during mitosis is required for interaction with TUBG1, HAUS1, HAUS2, HAUS3, HAUS4, HAUS5, HAUS6, HAUS7 and HAUS8 and their recruitment to spindle microtubules.

It localises to the cytoplasm. The protein localises to the cytoskeleton. The protein resides in the nucleus. Its subcellular location is the midbody. It is found in the spindle. Functionally, regulates mitotic spindle assembly, microtubule (MT)-kinetochore attachment and chromosome separation via recruitment of HAUS augmin-like complex and TUBG1 to the existing MTs and promoting MT-based MT nucleation. Required for proper alignnment of chromosomes during metaphase. The polypeptide is Echinoderm microtubule-associated protein-like 3 (EML3) (Homo sapiens (Human)).